Reading from the N-terminus, the 584-residue chain is 2-succinyl-5-enolpyruvyl-6-hydroxy-3-cyclohexene-1-carboxylate synthase (584 aa).

The protein belongs to the TPP enzyme family. MenD subfamily. Homodimer. Mg(2+) serves as cofactor. Requires Mn(2+) as cofactor. The cofactor is thiamine diphosphate.

It carries out the reaction isochorismate + 2-oxoglutarate + H(+) = 5-enolpyruvoyl-6-hydroxy-2-succinyl-cyclohex-3-ene-1-carboxylate + CO2. The protein operates within quinol/quinone metabolism; 1,4-dihydroxy-2-naphthoate biosynthesis; 1,4-dihydroxy-2-naphthoate from chorismate: step 2/7. Its pathway is quinol/quinone metabolism; menaquinone biosynthesis. Its function is as follows. Catalyzes the thiamine diphosphate-dependent decarboxylation of 2-oxoglutarate and the subsequent addition of the resulting succinic semialdehyde-thiamine pyrophosphate anion to isochorismate to yield 2-succinyl-5-enolpyruvyl-6-hydroxy-3-cyclohexene-1-carboxylate (SEPHCHC). The chain is 2-succinyl-5-enolpyruvyl-6-hydroxy-3-cyclohexene-1-carboxylate synthase from Bacillus cytotoxicus (strain DSM 22905 / CIP 110041 / 391-98 / NVH 391-98).